The following is a 305-amino-acid chain: GTPase Era (305 aa).

An Era-type G domain is found at 13–181 (RCGFVAIVGR…ESAVGRFLPE (169 aa)). Residues 21 to 28 (GRPNVGKS) are G1. 21–28 (GRPNVGKS) is a GTP binding site. The tract at residues 47 to 51 (QTTRH) is G2. The G3 stretch occupies residues 68 to 71 (DTPG). Residues 68-72 (DTPGM) and 130-133 (NKVD) contribute to the GTP site. The G4 stretch occupies residues 130 to 133 (NKVD). The segment at 160–162 (LSA) is G5. Positions 204 to 288 (VREKITRQLG…MLRLWVKVKR (85 aa)) constitute a KH type-2 domain.

The protein belongs to the TRAFAC class TrmE-Era-EngA-EngB-Septin-like GTPase superfamily. Era GTPase family. Monomer.

The protein resides in the cytoplasm. Its subcellular location is the cell inner membrane. Functionally, an essential GTPase that binds both GDP and GTP, with rapid nucleotide exchange. Plays a role in 16S rRNA processing and 30S ribosomal subunit biogenesis and possibly also in cell cycle regulation and energy metabolism. This is GTPase Era from Marinobacter nauticus (strain ATCC 700491 / DSM 11845 / VT8) (Marinobacter aquaeolei).